The following is a 566-amino-acid chain: Solute carrier family 22 member 16 (566 aa).

The helical transmembrane segment at 20–40 threads the bilayer; sequence FASAFQTISCGIHYLASVFIA. Residues Asn-52, Asn-60, and Asn-112 are each glycosylated (N-linked (GlcNAc...) asparagine). Transmembrane regions (helical) follow at residues 149-169, 176-196, 201-221, 237-257, and 261-281; these read LIQPIFMLGVLIGAVIFGDIA, PIIWITSTGQFLFGIAVAFTF, FVIVRFLLAMVSSGYYVVVFV, MHVHAFFAVGVMIVSLVGFLV, and WIYQIILSLTTLPFVLCCWML. The N-linked (GlcNAc...) asparagine glycan is linked to Asn-344. A run of 6 helical transmembrane segments spans residues 351-371, 381-401, 408-428, 436-456, 468-488, and 493-513; these read TITVWLIWFTGSLGYYVFALN, LNLFLTGAVEIPSYIVACLGM, NTLAPFLIISAVICGVIMLIP, IAMSMAGKFSIAVAFGLIYLY, LAVGSGSMMCRIGSVVAPFCV, and VWIFMPQMLVGIMAFLTGILT.

It belongs to the major facilitator (TC 2.A.1) superfamily. Organic cation transporter (TC 2.A.1.19) family.

It is found in the membrane. High affinity carnitine transporter. The polypeptide is Solute carrier family 22 member 16 (slc22a16) (Xenopus laevis (African clawed frog)).